Reading from the N-terminus, the 769-residue chain is Bifunctional glycosyltransferase pgtA (769 aa).

The tract at residues 25-210 is N-acetylgalactosamine 3-beta-galactosyltransferase; it reads YQGINNLIIS…SVIFKRSIFT (186 aa). Over residues 410-441 the composition is skewed to low complexity; that stretch reads NNINNNNNNNNNNNNNNNNNNNNNNNNNNNNN. Residues 410-442 are disordered; it reads NNINNNNNNNNNNNNNNNNNNNNNNNNNNNNNS. Residues 442-769 form an alpha-1,2-fucosyltransferase region; that stretch reads SILNFISGIN…SVHIGELFIS (328 aa).

This sequence belongs to the glycosyltransferase 2 family.

The catalysed reaction is an N-acetyl-beta-D-glucosaminyl derivative + UDP-alpha-D-galactose = a beta-D-galactosyl-(1-&gt;3)-N-acetyl-beta-D-glucosaminyl derivative + UDP + H(+). It carries out the reaction a beta-D-galactosyl-(1-&gt;3)-N-acetyl-beta-D-glucosaminyl derivative + GDP-beta-L-fucose = an alpha-L-Fuc-(1-&gt;2)-beta-D-Gal-(1-&gt;3)-beta-D-GlcNAc derivative + GDP + H(+). Bifunctional protein composed of 2 glycosyltransferase domains involved in glycosylating skp1. The N-terminal part catalyzes the transfer of a galactose residue to GlcNAc-skp1 in a beta 1-3 linkage. The C-terminal part catalyzes the transfer of a fucose residue to Gal-GlcNAc-skp1 in an alpha 1-2 linkage. The polypeptide is Bifunctional glycosyltransferase pgtA (pgtA) (Dictyostelium discoideum (Social amoeba)).